We begin with the raw amino-acid sequence, 274 residues long: Bis(5'-nucleosyl)-tetraphosphatase, symmetrical (274 aa).

Belongs to the Ap4A hydrolase family.

It carries out the reaction P(1),P(4)-bis(5'-adenosyl) tetraphosphate + H2O = 2 ADP + 2 H(+). Its function is as follows. Hydrolyzes diadenosine 5',5'''-P1,P4-tetraphosphate to yield ADP. This is Bis(5'-nucleosyl)-tetraphosphatase, symmetrical from Shewanella baltica (strain OS185).